We begin with the raw amino-acid sequence, 185 residues long: Recombination protein RecR (185 aa).

Residues C44–C59 form a C4-type zinc finger. Residues N67–P161 enclose the Toprim domain.

This sequence belongs to the RecR family.

In terms of biological role, may play a role in DNA repair. It seems to be involved in an RecBC-independent recombinational process of DNA repair. It may act with RecF and RecO. This Trichormus variabilis (strain ATCC 29413 / PCC 7937) (Anabaena variabilis) protein is Recombination protein RecR.